Consider the following 406-residue polypeptide: Argininosuccinate synthase (406 aa).

Residues 14-22 (AYSGGLDTS) and Ala-41 contribute to the ATP site. L-citrulline contacts are provided by Tyr-92 and Ser-97. ATP is bound at residue Gly-122. L-aspartate contacts are provided by Thr-124, Asn-128, and Asp-129. Asn-128 contacts L-citrulline. Residues Arg-132, Ser-181, Ser-190, Glu-266, and Tyr-278 each coordinate L-citrulline.

This sequence belongs to the argininosuccinate synthase family. Type 1 subfamily. In terms of assembly, homotetramer.

Its subcellular location is the cytoplasm. It carries out the reaction L-citrulline + L-aspartate + ATP = 2-(N(omega)-L-arginino)succinate + AMP + diphosphate + H(+). The protein operates within amino-acid biosynthesis; L-arginine biosynthesis; L-arginine from L-ornithine and carbamoyl phosphate: step 2/3. This is Argininosuccinate synthase from Geobacter sulfurreducens (strain ATCC 51573 / DSM 12127 / PCA).